A 712-amino-acid chain; its full sequence is MKRFFKMALFLGVSALYGQQGGMWIPSLLEGMNAKEMKTLGMKMTVADIYSVNKSSLKDAAPHFNGGCSSEVISDKGLLLTNHHCGYGQIQAHSTLQNDYLANGFWAKSLAEELPNKNLKVTFMVRIDDVTKQVLKGTESITDETEKAKLIEKNIAEVIKTAPKEAWQENSVKAFYDGNQYILFVTETFKDVRLVGAPPSSIGKFGSDTDNWVWPRHTGDFSLFRIYADKNNRPAEYSKDNVPYKPKHFFPISLKGVKEGDFVLVFGYPGTTQEYLPSAAVAQIENVINPARIGIRDIVLKVQDSYMRKDQGIKIKYAAKYARVANYWKKWMGETKGLKKSGAVALKQQQEAKFQQAIQKANKQAQYGNLLSDFNRLYKEIEPYTLAANLNSEFIFRNIDLLSNGSRLLQLEKALEDKGEQSFNDRKKNLLNTFKEIFKDNDKQVDKDVFEKVVVFYAANMPKNLLINSLKNFDAKKLADNLYNNSFLTSLSGVESVLNLSAAEFKERMKNDVGIQFVRELKEMNDTQVFPVYDRLNTQIHALQRTYMKAILEFSKPSDRIFPDANGTLRVTYGKVAGFSPADAVTYSAHTTLDGVMEKYVPGDYEFDVPQHLRDLQAKKDFGRYGDKNGKMPLCFLSTCHTTGGNSGSPAIDANGNLIGLNFDRVWEGTMSDIHYDPKLCRNIMVDIRYVLFVIDKYAGAGHLVNEMKLIK.

Positions 1–18 (MKRFFKMALFLGVSALYG) are cleaved as a signal peptide. Residues His-84, Asp-220, and Ser-647 each act as charge relay system in the active site.

Belongs to the peptidase S46 family.

Functionally, catalyzes the removal of dipeptides from the N-terminus of oligopeptides. Shows a strict specificity for acidic residues (Asp or Glu) in the P1 position, and has probably a hydrophobic residue preference at the P2 position. Preferentially cleaves the synthetic substrate Leu-Asp-methylcoumaryl-7-amide (Leu-Asp-MCA) as compared to Leu-Glu-MCA. The protein is Asp/Glu-specific dipeptidyl-peptidase (dpp11) of Capnocytophaga gingivalis.